We begin with the raw amino-acid sequence, 433 residues long: MATLFHLIDVHGNEYQNVQDHSLQMALEELNQQIEVIQRQEEQLALRKKAIEDARQEVLQQIQHRKFRQYLHEREQEARLQEYYLEQLQERRAFENVVRTIIRKRFEDEERERAHRREKAARKLLRRILVSDSPNMQLVVPNNFQQMFIHHPVVDTIYSPEESSESQAEVADQQTGPYSTSEYAGAQQSQPFRIFIQNDNAPEQQSGPDVAELNTLPNRSKTSSQASVSDEELSRTELAELNDYLLAAQRRSNKRGNARKHIDLTARESPSTSFAQMSKGALNPDPEVIEPEDEPTTFRNPLEALLSTGQYSVVSSDEDVESVRDPDDGTLPIHSTQTVEEPIDTKAGEKLTDSSKQPSPPVAEHFSNETFSASPKGAETDVKSEGSNNHEQGSFNEPKSNVDSNDSASPKRPSSQASLRHNVTVEEVPDEDA.

Disordered stretches follow at residues Ser159–Ala184, Asn200–Ser234, and Ser252–Ala433. Composition is skewed to polar residues over residues Asp172–Ala184 and Thr215–Val228. A phosphoserine mark is found at Ser227, Ser229, and Ser269. The segment covering Ile343 to Asp353 has biased composition (basic and acidic residues). Residues Glu385–His421 show a composition bias toward polar residues. Ser409, Ser415, and Ser418 each carry phosphoserine.

This Schizosaccharomyces pombe (strain 972 / ATCC 24843) (Fission yeast) protein is Protein slt1 (slt1).